The chain runs to 243 residues: Small ribosomal subunit protein uS3 (243 aa).

Residues 39–110 enclose the KH type-2 domain; it reads IRTFIQKKYG…QVRINVVEVE (72 aa). The interval 216 to 243 is disordered; the sequence is QTIPVGASPKRKASRRPQQFEDRSNENS. The segment covering 233-243 has biased composition (basic and acidic residues); it reads QQFEDRSNENS.

This sequence belongs to the universal ribosomal protein uS3 family. Part of the 30S ribosomal subunit. Forms a tight complex with proteins S10 and S14.

In terms of biological role, binds the lower part of the 30S subunit head. Binds mRNA in the 70S ribosome, positioning it for translation. This Prochlorococcus marinus (strain AS9601) protein is Small ribosomal subunit protein uS3.